An 86-amino-acid chain; its full sequence is Beta-toxin Tz1 (86 aa).

Residues 1–20 (MTRFVLFICCFFLIGMVVEC) form the signal peptide. Residues 21–83 (KDGYLVGNDG…TWDRATNRCG (63 aa)) enclose the LCN-type CS-alpha/beta domain. 4 cysteine pairs are disulfide-bonded: C31–C82, C35–C57, C43–C63, and C47–C65. R84 carries the post-translational modification Arginine amide.

Belongs to the long (4 C-C) scorpion toxin superfamily. Sodium channel inhibitor family. Beta subfamily. Expressed by the venom gland.

The protein resides in the secreted. Functionally, beta toxins bind voltage-independently at site-4 of sodium channels (Nav) and shift the voltage of activation toward more negative potentials thereby affecting sodium channel activation and promoting spontaneous and repetitive firing. Strongly affects skeletal muscle channels Nav1.4/SCN4A, poorly affects the neuronal channels Nav1.6/SCN8A and Nav1.2/SCN2A. Induces spastic paralysis of rear limbs, increased salivation, apnea, tachycardia and increased perspiration. This is Beta-toxin Tz1 from Tityus zulianus (Venezuelan scorpion).